The primary structure comprises 378 residues: Tafazzin (378 aa).

The Mitochondrial intermembrane portion of the chain corresponds to 1–137; the sequence is MFMVVCSNLR…RLRNPSKFWY (137 aa). Residues 46-112 form a disordered region; that stretch reads APEARPVPDE…DQDADPSLDV (67 aa). The span at 51 to 67 shows a compositional bias: basic and acidic residues; that stretch reads PVPDERYPGSQQDRKDI. An intramembrane segment occupies 138-158; the sequence is VVSQFVVSAVGIFSKVVLMFL. Over 159–378 the chain is Mitochondrial intermembrane; sequence NKPRVYNRER…ETEKLHRERN (220 aa). Positions 188–193 match the HXXXXD motif motif; sequence HYSCFD.

The protein belongs to the taffazin family. Associates with multiple protein complexes. Association with large protein complexes occurs only in the presence of cardiolipin.

The protein localises to the mitochondrion outer membrane. It localises to the mitochondrion inner membrane. It is found in the mitochondrion. Its subcellular location is the mitochondrion membrane. The protein resides in the golgi apparatus membrane. The protein localises to the endoplasmic reticulum membrane. The catalysed reaction is 1'-[1,2-diacyl-sn-glycero-3-phospho],3'-[1-acyl-sn-glycero-3-phospho]-glycerol + a 1,2-diacyl-sn-glycero-3-phosphocholine = a cardiolipin + a 1-acyl-sn-glycero-3-phosphocholine. The enzyme catalyses 1'-[1,2-di-(9Z,12Z-octadecadienoyl)-sn-glycero-3-phospho]-3'-[1-(9Z,12Z-octadecadienoyl)-sn-glycero-3-phospho]-glycerol + 1-hexadecanoyl-2-(9Z,12Z-octadecadienoyl)-sn-glycero-3-phosphocholine = 1',3'-bis-[1,2-di-(9Z,12Z-octadecadienoyl)-sn-glycero-3-phospho]-glycerol + 1-hexadecanoyl-sn-glycero-3-phosphocholine. It carries out the reaction 1'-[1,2-di-(9Z,12Z-octadecadienoyl)-sn-glycero-3-phospho]-3'-[2-(9Z,12Z-octadecadienoyl)-sn-glycero-3-phospho]-glycerol + 1-hexadecanoyl-2-(9Z,12Z-octadecadienoyl)-sn-glycero-3-phosphocholine = 1',3'-bis-[1,2-di-(9Z,12Z-octadecadienoyl)-sn-glycero-3-phospho]-glycerol + 1-hexadecanoyl-sn-glycero-3-phosphocholine. It catalyses the reaction 1,2-di-(9Z,12Z-octadecadienoyl)-sn-glycero-3-phosphocholine + 1'-[1,2-di-(9Z,12Z-octadecadienoyl)-sn-glycero-3-phospho]-3'-[1-(9Z,12Z-octadecadienoyl)-sn-glycero-3-phospho]-glycerol = 1-(9Z,12Z)-octadecadienoyl-sn-glycero-3-phosphocholine + 1',3'-bis-[1,2-di-(9Z,12Z-octadecadienoyl)-sn-glycero-3-phospho]-glycerol. The catalysed reaction is 1-tetradecanoyl-sn-glycero-3-phosphocholine + 1',3'-bis-[1,2-di-(9Z,12Z-octadecadienoyl)-sn-glycero-3-phospho]-glycerol = 1-tetradecanoyl-2-(9Z,12Z-octadecadienoyl)-sn-glycero-3-phosphocholine + 1'-[1,2-di-(9Z,12Z-octadecadienoyl)-sn-glycero-3-phospho]-3'-[1-(9Z,12Z-octadecadienoyl)-sn-glycero-3-phospho]-glycerol. The enzyme catalyses 1',3'-bis[1,2-di-(9Z-octadecenoyl)-sn-glycero-3-phospho]-glycerol + 1-nonadecanoyl-sn-glycero-3-phosphocholine = 1-nonadecanoyl-2-(9Z-octadecenoyl)-sn-glycero-3-phosphocholine + 1'-[1,2-di-(9Z-octadecenoyl)-sn-glycero-3-phospho]-3'-[1-(9Z-octadecenoyl)-sn-glycero-3-phospho]-glycerol. It carries out the reaction a 1,2-diacyl-sn-glycero-3-phospho-(1'-sn-glycerol) + a 1-acyl-sn-glycero-3-phosphocholine = 1-acyl-sn-glycero-3-phospho-(1'-sn-glycerol) + a 1,2-diacyl-sn-glycero-3-phosphocholine. It catalyses the reaction 1-hexadecanoyl-2-(9Z,12Z-octadecadienoyl)-sn-glycero-3-phospho-(1'-sn-glycerol) + 1-hexadecanoyl-sn-glycero-3-phosphocholine = 1-hexadecanoyl-sn-glycero-3-phospho-(1'-sn-glycerol) + 1-hexadecanoyl-2-(9Z,12Z-octadecadienoyl)-sn-glycero-3-phosphocholine. The catalysed reaction is 1,2-di-(9Z-octadecenoyl)-sn-glycero-3-phospho-(1'-sn-glycerol) + 1-nonadecanoyl-sn-glycero-3-phosphocholine = 1-nonadecanoyl-2-(9Z-octadecenoyl)-sn-glycero-3-phosphocholine + 1-(9Z-octadecenoyl)-sn-glycero-3-phospho-(1'-sn-glycerol). The enzyme catalyses a 1,2-diacyl-sn-glycero-3-phosphate + a 1-acyl-sn-glycero-3-phosphocholine = a 1-acyl-sn-glycero-3-phosphate + a 1,2-diacyl-sn-glycero-3-phosphocholine. It carries out the reaction 1-hexadecanoyl-2-(9Z,12Z-octadecadienoyl)-sn-glycero-3-phosphate + 1-hexadecanoyl-sn-glycero-3-phosphocholine = 1-hexadecanoyl-2-(9Z,12Z-octadecadienoyl)-sn-glycero-3-phosphocholine + 1-hexadecanoyl-sn-glycero-3-phosphate. It catalyses the reaction 1-hexadecanoyl-2-(9Z,12Z-octadecadienoyl)-sn-glycero-3-phosphocholine + 1-(9Z-octadecenoyl)-sn-glycero-3-phosphate = 1-(9Z)-octadecenoyl-2-(9Z,12Z)-octadecadienoyl-sn-glycero-3-phosphate + 1-hexadecanoyl-sn-glycero-3-phosphocholine. The catalysed reaction is a 1-acyl-sn-glycero-3-phosphocholine + a 1,2-diacyl-sn-glycero-3-phosphoethanolamine = a 1-acyl-sn-glycero-3-phosphoethanolamine + a 1,2-diacyl-sn-glycero-3-phosphocholine. The enzyme catalyses 1-hexadecanoyl-2-(9Z,12Z-octadecadienoyl)-sn-glycero-3-phosphoethanolamine + 1-hexadecanoyl-sn-glycero-3-phosphocholine = 1-hexadecanoyl-2-(9Z,12Z-octadecadienoyl)-sn-glycero-3-phosphocholine + 1-hexadecanoyl-sn-glycero-3-phosphoethanolamine. It carries out the reaction 1,2-di-(9Z,12Z-octadecadienoyl)-sn-glycero-3-phosphoethanolamine + 1-tetradecanoyl-sn-glycero-3-phosphocholine = 1-(9Z,12Z-octadecadienoyl)-sn-glycero-3-phosphoethanolamine + 1-tetradecanoyl-2-(9Z,12Z-octadecadienoyl)-sn-glycero-3-phosphocholine. It catalyses the reaction 1'-[1,2-diacyl-sn-glycero-3-phospho],3'-[1-acyl-sn-glycero-3-phospho]-glycerol + a 1,2-diacyl-sn-glycero-3-phosphoethanolamine = a cardiolipin + a 1-acyl-sn-glycero-3-phosphoethanolamine. The catalysed reaction is 1-hexadecanoyl-2-(9Z,12Z-octadecadienoyl)-sn-glycero-3-phosphoethanolamine + 1'-[1,2-di-(9Z,12Z-octadecadienoyl)-sn-glycero-3-phospho]-3'-[1-(9Z,12Z-octadecadienoyl)-sn-glycero-3-phospho]-glycerol = 1',3'-bis-[1,2-di-(9Z,12Z-octadecadienoyl)-sn-glycero-3-phospho]-glycerol + 1-hexadecanoyl-sn-glycero-3-phosphoethanolamine. The enzyme catalyses 1'-[1-(9Z,12Z-octadecadienoyl)-2-(9Z-octadecenoyl)-sn-glycero-3-phospho]-3'-[1-(9Z,12Z-octadecadienoyl)-sn-glycero-3-phospho]-glycerol + 1',3'-bis-[1,2-di-(9Z,12Z-octadecadienoyl)-sn-glycero-3-phospho]-glycerol = 1'-[1,2-di-(9Z,12Z-octadecadienoyl)-sn-glycero-3-phospho]-3'-[1-(9Z,12Z-octadecadienoyl)-2-(9Z-octadecenoyl)-sn-glycero-3-phospho]-glycerol + 1'-[1,2-di-(9Z,12Z-octadecadienoyl)-sn-glycero-3-phospho]-3'-[1-(9Z,12Z-octadecadienoyl)-sn-glycero-3-phospho]-glycerol. It carries out the reaction 1,2-di-(9Z-hexadecenoyl)-sn-glycero-3-phosphocholine + 1-hexadecanoyl-sn-glycero-3-phosphocholine = 1-hexadecanoyl-2-(9Z-hexadecenoyl)-sn-glycero-3-phosphocholine + 1-(9Z-hexadecenoyl)-sn-glycero-3-phosphocholine. It catalyses the reaction 1,2-dioctadecanoyl-sn-glycero-3-phosphocholine + 1-hexadecanoyl-sn-glycero-3-phosphocholine = 1-hexadecanoyl-2-octadecanoyl-sn-glycero-3-phosphocholine + 1-octadecanoyl-sn-glycero-3-phosphocholine. The catalysed reaction is 1,2-di-(9Z-octadecenoyl)-sn-glycero-3-phosphocholine + 1-hexadecanoyl-sn-glycero-3-phosphocholine = 1-hexadecanoyl-2-(9Z-octadecenoyl)-sn-glycero-3-phosphocholine + 1-(9Z-octadecenoyl)-sn-glycero-3-phosphocholine. The enzyme catalyses 1,2-di-(9Z,12Z-octadecadienoyl)-sn-glycero-3-phosphocholine + 1-(9Z-octadecenoyl)-sn-glycero-3-phosphocholine = 1-(9Z)-octadecenoyl-2-(9Z,12Z)-octadecadienoyl-sn-glycero-3-phosphocholine + 1-(9Z,12Z)-octadecadienoyl-sn-glycero-3-phosphocholine. It carries out the reaction 1,2-di-(9Z,12Z,15Z-octadecatrienoyl)-sn-glycero-3-phosphocholine + 1-tetradecanoyl-sn-glycero-3-phosphocholine = 1-tetradecanoyl-2-(9Z,12Z,15Z-octadecatrienoyl)-sn-glycero-3-phosphocholine + 1-(9Z,12Z,15Z-octadecatrienoyl)-sn-glycero-3-phosphocholine. It catalyses the reaction 1-nonadecanoyl-sn-glycero-3-phosphocholine + 1-octadecanoyl-2-(9Z-octadecenoyl)-sn-glycero-3-phosphocholine = 1-nonadecanoyl-2-(9Z-octadecenoyl)-sn-glycero-3-phosphocholine + 1-octadecanoyl-sn-glycero-3-phosphocholine. The catalysed reaction is 1-(9Z)-octadecenoyl-2-octadecanoyl-sn-glycero-3-phosphocholine + 1-nonadecanoyl-sn-glycero-3-phosphocholine = 2-octadecanoyl-sn-glycero-3-phosphocholine + 1-nonadecanoyl-2-(9Z-octadecenoyl)-sn-glycero-3-phosphocholine. The protein operates within phospholipid metabolism. Its function is as follows. Acyltransferase required to remodel newly synthesized phospholipid cardiolipin (1',3'-bis-[1,2-diacyl-sn-glycero-3-phospho]-glycerol or CL), a key component of the mitochondrial inner membrane, with tissue specific acyl chains necessary for adequate mitochondrial function. Its role in cellular physiology is to improve mitochondrial performance. CL is critical for the coassembly of lipids and proteins in mitochondrial membranes. For instance, remodeling of the acyl groups of CL in the mitochondrial inner membrane affects the assembly and stability of respiratory chain complex IV and its supercomplex forms. Catalyzes the transacylation between phospholipids and lysophospholipids, with the highest rate being between phosphatidylcholine (1,2-diacyl-sn-glycero-3-phosphocholine or PC) and CL. Catalyzes both 1-acyl-sn-glycero-3-phosphocholine (lysophosphatidylcholine or LPC) reacylation and PC-CL transacylation, that means, it exchanges acyl groups between CL and PC by a combination of forward and reverse transacylations. Also catalyzes transacylations between other phospholipids such as phosphatidylethanolamine (1,2-diacyl-sn-glycero-3-phosphoethanolamine or PE) and CL, between PC and PE, and between PC and phosphatidate (1,2-diacyl-sn-glycero-3-phosphate or PA), although at lower rate. Not regiospecific, it transfers acyl groups into any of the sn-1 and sn-2 positions of the monolysocardiolipin (MLCL), which is an important prerequisite for uniformity and symmetry in CL acyl distribution. Cannot transacylate dilysocardiolipin (DLCL), thus, the role of MLCL is limited to that of an acyl acceptor. CoA-independent, it can reshuffle molecular species within a single phospholipid class. Redistributes fatty acids between MLCL, CL, and other lipids, which prolongs the half-life of CL. Its action is completely reversible, which allows for cyclic changes, such as fission and fusion or bending and flattening of the membrane. Hence, by contributing to the flexibility of the lipid composition, it plays an important role in the dynamics of mitochondria membranes. Essential for the final stage of spermatogenesis, spermatid individualization. Required for the initiation of mitophagy. This Drosophila melanogaster (Fruit fly) protein is Tafazzin.